We begin with the raw amino-acid sequence, 308 residues long: Probable GTP 3',8-cyclase (308 aa).

One can recognise a Radical SAM core domain in the interval 4–222; the sequence is RFGRPLEDLR…KKLIRKKHFR (219 aa). Arginine 13 contributes to the GTP binding site. The [4Fe-4S] cluster site is built by cysteine 20, cysteine 24, and cysteine 27. Residue lysine 60 coordinates GTP. Glycine 64 lines the S-adenosyl-L-methionine pocket. A GTP-binding site is contributed by threonine 90. Serine 114 lines the S-adenosyl-L-methionine pocket. Lysine 151 is a binding site for GTP. The [4Fe-4S] cluster site is built by cysteine 245 and cysteine 248. 250 to 252 serves as a coordination point for GTP; it reads RIR. Residue cysteine 262 participates in [4Fe-4S] cluster binding.

This sequence belongs to the radical SAM superfamily. MoaA family. Requires [4Fe-4S] cluster as cofactor.

The catalysed reaction is GTP + AH2 + S-adenosyl-L-methionine = (8S)-3',8-cyclo-7,8-dihydroguanosine 5'-triphosphate + 5'-deoxyadenosine + L-methionine + A + H(+). Its pathway is cofactor biosynthesis; molybdopterin biosynthesis. Catalyzes the cyclization of GTP to (8S)-3',8-cyclo-7,8-dihydroguanosine 5'-triphosphate. The polypeptide is Probable GTP 3',8-cyclase (Saccharolobus solfataricus (strain ATCC 35092 / DSM 1617 / JCM 11322 / P2) (Sulfolobus solfataricus)).